Consider the following 335-residue polypeptide: DNA-directed RNA polymerase RPB7 homolog (335 aa).

This sequence belongs to the Asfivirus DNA-directed RNA polymerase RPB7 homolog family. As to quaternary structure, part of the viral DNA-directed RNA polymerase that consists of 8 polII-like subunits (RPB1, RPB2, RPB3, RPB5, RPB6, RPB7, RPB9, RPB10), a capping enzyme and a termination factor.

It is found in the host cytoplasm. The protein resides in the virion. In terms of biological role, component of the DNA-directed RNA polymerase (RNAP) that catalyzes the transcription in the cytoplasm of viral DNA into RNA using the four ribonucleoside triphosphates as substrates. This is DNA-directed RNA polymerase RPB7 homolog from African swine fever virus (isolate Pig/Kenya/KEN-50/1950) (ASFV).